A 329-amino-acid polypeptide reads, in one-letter code: Carrier protein YMC2, mitochondrial (329 aa).

The tract at residues 1-27 (MSEEFPTPQLLDELEDQQKVTTPNEKR) is disordered. The N-terminal 33 residues, 1–33 (MSEEFPTPQLLDELEDQQKVTTPNEKRELSSNR), are a transit peptide targeting the mitochondrion. Solcar repeat units follow at residues 34 to 115 (VLKD…MKRF), 143 to 226 (SQYY…LVAR), and 238 to 325 (PPWK…VMRF). The next 6 helical transmembrane spans lie at 38 to 58 (IFAG…FDTT), 84 to 104 (VFAF…CVSV), 140 to 160 (LPLS…SFLA), 205 to 225 (TMIR…ALVA), 243 to 263 (CLFG…LDVV), and 297 to 318 (FFKG…TFLT).

This sequence belongs to the mitochondrial carrier (TC 2.A.29) family.

It is found in the mitochondrion inner membrane. The polypeptide is Carrier protein YMC2, mitochondrial (YMC2) (Saccharomyces cerevisiae (strain ATCC 204508 / S288c) (Baker's yeast)).